The following is a 141-amino-acid chain: HTH-type transcriptional regulator MntR (141 aa).

Residues 1-63 (MPTPSMEDYI…YEKYRGLVLT (63 aa)) enclose the HTH dtxR-type domain. 6 residues coordinate Mn(2+): Asp8, Glu11, His77, Glu99, Glu102, and His103.

The protein belongs to the DtxR/MntR family. Homodimer.

Its subcellular location is the cytoplasm. DNA binding is strongly activated by Mn(2+). Central regulator of manganese homeostasis. This chain is HTH-type transcriptional regulator MntR, found in Geobacillus kaustophilus (strain HTA426).